A 1755-amino-acid chain; its full sequence is Transposon Ty1-NL1 Gag-Pol polyprotein (1755 aa).

Polar residues-rich tracts occupy residues 1–23 (MESQ…SVTS), 48–60 (TKAN…TPAS), 71–86 (SPQT…GPYQ), and 131–152 (PQYP…GNTF). Disordered regions lie at residues 1–86 (MESQ…GPYQ), 131–171 (PQYP…YVRP), and 350–420 (QQES…IRGS). Low complexity predominate over residues 153 to 165 (TDSSSADSDMTST). The tract at residues 299–401 (NNGIPINNKV…NSQSRTARAH (103 aa)) is RNA-binding. Basic and acidic residues predominate over residues 363-372 (NPSDEKKDSR). Over residues 373-412 (TYTNTTKPKSITRNSQKPNNSQSRTARAHNVSTSNNSSGP) the composition is skewed to polar residues. Asp-461 acts as the For protease activity; shared with dimeric partner in catalysis. The tract at residues 583–640 (NVHTSESTRKYPYPFIHRMLAHANAQTIRYSLKNNTITYFNESDVDWSSAIDYQCPDC) is integrase-type zinc finger-like. The 176-residue stretch at 660–835 (NSYEPFQYLH…AGLDISTLLP (176 aa)) folds into the Integrase catalytic domain. Positions 671 and 736 each coordinate Mg(2+). 2 disordered regions span residues 956-1120 (SKAV…TCPK) and 1146-1172 (DSFK…SNAY). The span at 960-969 (SPTDSTPPST) shows a compositional bias: low complexity. Over residues 1005–1015 (STPQISDIEST) the composition is skewed to polar residues. Residues 1038–1053 (ESSHTSKSKDFRHSDS) are compositionally biased toward basic and acidic residues. Polar residues-rich tracts occupy residues 1054–1082 (YSDN…QTSE) and 1095–1106 (SIDTSSSESNSL). The Bipartite nuclear localization signal motif lies at 1178–1212 (KKRSLEDNETEIKVSRDTWNTKNMRSLEPPRSKKR). Residues 1338–1476 (NNYYITQLDI…DILGLEIKYQ (139 aa)) enclose the Reverse transcriptase Ty1/copia-type domain. Mg(2+)-binding residues include Asp-1346, Asp-1427, Asp-1428, Asp-1610, Glu-1652, and Asp-1685. Residues 1610–1752 (DASYGNQPYY…IKTFKLLTNK (143 aa)) enclose the RNase H Ty1/copia-type domain.

The capsid protein forms a homotrimer, from which the VLPs are assembled. The protease is a homodimer, whose active site consists of two apposed aspartic acid residues. Post-translationally, initially, virus-like particles (VLPs) are composed of the structural unprocessed proteins Gag and Gag-Pol, and also contain the host initiator methionine tRNA (tRNA(i)-Met) which serves as a primer for minus-strand DNA synthesis, and a dimer of genomic Ty RNA. Processing of the polyproteins occurs within the particle and proceeds by an ordered pathway, called maturation. First, the protease (PR) is released by autocatalytic cleavage of the Gag-Pol polyprotein yielding capsid protein p45 and a Pol-p154 precursor protein. This cleavage is a prerequisite for subsequent processing of Pol-p154 at the remaining sites to release the mature structural and catalytic proteins. Maturation takes place prior to the RT reaction and is required to produce transposition-competent VLPs.

The protein localises to the cytoplasm. The protein resides in the nucleus. It catalyses the reaction DNA(n) + a 2'-deoxyribonucleoside 5'-triphosphate = DNA(n+1) + diphosphate. The enzyme catalyses Endonucleolytic cleavage to 5'-phosphomonoester.. In terms of biological role, capsid protein (CA) is the structural component of the virus-like particle (VLP), forming the shell that encapsulates the retrotransposons dimeric RNA genome. The particles are assembled from trimer-clustered units and there are holes in the capsid shells that allow for the diffusion of macromolecules. CA also has nucleocapsid-like chaperone activity, promoting primer tRNA(i)-Met annealing to the multipartite primer-binding site (PBS), dimerization of Ty1 RNA and initiation of reverse transcription. The aspartyl protease (PR) mediates the proteolytic cleavages of the Gag and Gag-Pol polyproteins after assembly of the VLP. Its function is as follows. Reverse transcriptase/ribonuclease H (RT) is a multifunctional enzyme that catalyzes the conversion of the retro-elements RNA genome into dsDNA within the VLP. The enzyme displays a DNA polymerase activity that can copy either DNA or RNA templates, and a ribonuclease H (RNase H) activity that cleaves the RNA strand of RNA-DNA heteroduplexes during plus-strand synthesis and hydrolyzes RNA primers. The conversion leads to a linear dsDNA copy of the retrotransposon that includes long terminal repeats (LTRs) at both ends. Functionally, integrase (IN) targets the VLP to the nucleus, where a subparticle preintegration complex (PIC) containing at least integrase and the newly synthesized dsDNA copy of the retrotransposon must transit the nuclear membrane. Once in the nucleus, integrase performs the integration of the dsDNA into the host genome. The sequence is that of Transposon Ty1-NL1 Gag-Pol polyprotein (TY1B-NL1) from Saccharomyces cerevisiae (strain ATCC 204508 / S288c) (Baker's yeast).